The primary structure comprises 237 residues: Aspartate/glutamate leucyltransferase (237 aa).

It belongs to the R-transferase family. Bpt subfamily.

It is found in the cytoplasm. It carries out the reaction N-terminal L-glutamyl-[protein] + L-leucyl-tRNA(Leu) = N-terminal L-leucyl-L-glutamyl-[protein] + tRNA(Leu) + H(+). The enzyme catalyses N-terminal L-aspartyl-[protein] + L-leucyl-tRNA(Leu) = N-terminal L-leucyl-L-aspartyl-[protein] + tRNA(Leu) + H(+). Functionally, functions in the N-end rule pathway of protein degradation where it conjugates Leu from its aminoacyl-tRNA to the N-termini of proteins containing an N-terminal aspartate or glutamate. The polypeptide is Aspartate/glutamate leucyltransferase (Shewanella amazonensis (strain ATCC BAA-1098 / SB2B)).